Here is a 1048-residue protein sequence, read N- to C-terminus: Anguibactin system regulator (1048 aa).

The Carrier domain occupies 965 to 1039 (PIITASEDRV…AFAIIMDRCR (75 aa)).

It belongs to the ATP-dependent AMP-binding enzyme family.

Its pathway is siderophore biosynthesis; anguibactin biosynthesis. Its function is as follows. Bifunctional protein that plays an essential role in virulence. Plays a role in both production of the siderophore anguibactin and regulation of iron transport genes. The protein is Anguibactin system regulator (angR) of Vibrio anguillarum (strain ATCC 68554 / 775) (Listonella anguillarum).